The primary structure comprises 313 residues: Heterogeneous nuclear ribonucleoproteins C1/C2 (313 aa).

An N-acetylalanine modification is found at Ala-2. Glycyl lysine isopeptide (Lys-Gly) (interchain with G-Cter in SUMO2) cross-links involve residues Lys-8, Lys-50, Lys-89, and Lys-94. The 72-residue stretch at 16-87 folds into the RRM domain; that stretch reads SRVFIGNLNT…QVLDINLAAE (72 aa). Residues Ser-113, Ser-115, and Ser-121 each carry the phosphoserine modification. Disordered stretches follow at residues 139–191 and 219–313; these read YPAR…KLKG and EKEQ…EDDS. A Nuclear localization signal motif is present at residues 155–161; that stretch reads PSKRQRV. Ser-162 and Ser-166 each carry phosphoserine. The span at 175–186 shows a compositional bias: low complexity; sequence SKSGQRGSSSKS. The residue at position 176 (Lys-176) is an N6-acetyllysine; alternate. A Glycyl lysine isopeptide (Lys-Gly) (interchain with G-Cter in SUMO2); alternate cross-link involves residue Lys-176. The stretch at 191-226 forms a coiled coil; sequence GDDLQAIKKELTQIKQKVDSLLESLEKIEKEQSKQA. Lys-224 participates in a covalent cross-link: Glycyl lysine isopeptide (Lys-Gly) (interchain with G-Cter in SUMO2). Ser-229, Ser-231, and Ser-232 each carry phosphoserine. Residue Lys-237 forms a Glycyl lysine isopeptide (Lys-Gly) (interchain with G-Cter in SUMO2) linkage. Lys-240 participates in a covalent cross-link: Glycyl lysine isopeptide (Lys-Gly) (interchain with G-Cter in SUMO2); alternate. Lys-240 participates in a covalent cross-link: Glycyl lysine isopeptide (Lys-Gly) (interchain with G-Cter in SUMO1); alternate. Phosphoserine is present on residues Ser-241, Ser-246, Ser-247, and Ser-249. Residues 250–261 show a composition bias toward basic and acidic residues; that stretch reads VKKDETNVKMES. Residues Lys-251 and Lys-252 each participate in a glycyl lysine isopeptide (Lys-Gly) (interchain with G-Cter in SUMO2) cross-link. Lys-258 participates in a covalent cross-link: Glycyl lysine isopeptide (Lys-Gly) (interchain with G-Cter in SUMO2); alternate. Lys-258 participates in a covalent cross-link: Glycyl lysine isopeptide (Lys-Gly) (interchain with G-Cter in SUMO); alternate. Residues Ser-261 and Ser-268 each carry the phosphoserine modification. Residues 263–284 are compositionally biased toward acidic residues; it reads AGADDSAEEGDLLDDDDNEDRG. Basic and acidic residues predominate over residues 285–294; sequence DDQLELKDDE. The segment covering 295 to 313 has biased composition (acidic residues); it reads KEPEEGEDDRDSANGEDDS. Ser-306 and Ser-313 each carry phosphoserine.

The protein belongs to the RRM HNRPC family. RALY subfamily. Tetramer composed of 3 copies of isoform C1 and 1 copy of isoform C2. Assembly of 3 tetramers with bound pre-mRNA gives rise to a 19S complex that interacts with HNRNPA2B1 tetramers. Component of the 40S hnRNP particle. Identified in the spliceosome C complex. Interacts with IGF2BP1. Interacts with DHX9; this interaction is direct, enhanced probably by their concomitant binding to RNA and mediates the attachment to actin filaments. Interacts with PPIA/CYPA. Post-translationally, phosphorylated on Ser-268 and Ser-306 in resting cells. In terms of processing, sumoylated. Sumoylation reduces affinity for mRNA. Ubiquitinated and degraded after nucleo-cytoplasmic transport by YWHAE.

Its subcellular location is the nucleus. Functionally, binds pre-mRNA and nucleates the assembly of 40S hnRNP particles. Interacts with poly-U tracts in the 3'-UTR or 5'-UTR of mRNA and modulates the stability and the level of translation of bound mRNA molecules. Single HNRNPC tetramers bind 230-240 nucleotides. Trimers of HNRNPC tetramers bind 700 nucleotides. May play a role in the early steps of spliceosome assembly and pre-mRNA splicing. N6-methyladenosine (m6A) has been shown to alter the local structure in mRNAs and long non-coding RNAs (lncRNAs) via a mechanism named 'm(6)A-switch', facilitating binding of HNRNPC, leading to regulation of mRNA splicing. The protein is Heterogeneous nuclear ribonucleoproteins C1/C2 (Hnrnpc) of Mus musculus (Mouse).